Reading from the N-terminus, the 142-residue chain is Large ribosomal subunit protein uL11 (142 aa).

Belongs to the universal ribosomal protein uL11 family. Part of the ribosomal stalk of the 50S ribosomal subunit. Interacts with L10 and the large rRNA to form the base of the stalk. L10 forms an elongated spine to which L12 dimers bind in a sequential fashion forming a multimeric L10(L12)X complex. One or more lysine residues are methylated.

Functionally, forms part of the ribosomal stalk which helps the ribosome interact with GTP-bound translation factors. In Buchnera aphidicola subsp. Acyrthosiphon pisum (strain APS) (Acyrthosiphon pisum symbiotic bacterium), this protein is Large ribosomal subunit protein uL11.